A 283-amino-acid chain; its full sequence is Pantothenate synthetase (283 aa).

ATP is bound at residue 30–37; it reads MGFLHEGH. The active-site Proton donor is the H37. Position 61 (Q61) interacts with (R)-pantoate. Q61 contributes to the beta-alanine binding site. Residue 147-150 coordinates ATP; sequence GKKD. (R)-pantoate is bound at residue Q153. ATP-binding positions include V176 and 184 to 187; that span reads MSSR.

The protein belongs to the pantothenate synthetase family. In terms of assembly, homodimer.

The protein localises to the cytoplasm. The catalysed reaction is (R)-pantoate + beta-alanine + ATP = (R)-pantothenate + AMP + diphosphate + H(+). Its pathway is cofactor biosynthesis; (R)-pantothenate biosynthesis; (R)-pantothenate from (R)-pantoate and beta-alanine: step 1/1. Its function is as follows. Catalyzes the condensation of pantoate with beta-alanine in an ATP-dependent reaction via a pantoyl-adenylate intermediate. The polypeptide is Pantothenate synthetase (Trichlorobacter lovleyi (strain ATCC BAA-1151 / DSM 17278 / SZ) (Geobacter lovleyi)).